The following is a 355-amino-acid chain: Probable aldo-keto reductase 3 (355 aa).

Catalysis depends on tyrosine 70, which acts as the Proton donor. Residue histidine 138 participates in substrate binding. Serine 217–glycine 227 is a binding site for NADP(+).

Belongs to the aldo/keto reductase family.

The protein is Probable aldo-keto reductase 3 of Oryza sativa subsp. japonica (Rice).